Consider the following 400-residue polypeptide: MAKAKYERTKPHLNIGTIGHIDHGKTTLTAAITKTLSQVGGAKATSYEEIDKAPEERERGITINTSHVEYQTETRHYAHVDCPGHADYIKNMITGAAQMDGSILVVSAADGPMPQTREHILLSRQVGVPYIVVFMNKTDMVDDPELLELVEMEVRELLSFYEFPGDDIPVLMGSALKALECGCGTRECEWCKHIWELMDAVDSYIPLPQRAVDKPFLMPIEDVFTITGRGTVTTGRVERGQVKVGDEVEIVGMREATRKTVCTGVEMFRKLLDYAEAGDNIGTLLRGVDRKEVERGMVLAKPGSIKPLTAFNAEVYVLTKEEGGRHTPFFGGYRPQFYFRTTDVTGIIQLPEGVEMVMPGDNVQMAIELITPIAIEEGLRFAIREGGRTVGAGVVTSLNE.

A tr-type G domain is found at 10 to 209; it reads KPHLNIGTIG…AVDSYIPLPQ (200 aa). The G1 stretch occupies residues 19 to 26; the sequence is GHIDHGKT. 19-26 contacts GTP; it reads GHIDHGKT. A Mg(2+)-binding site is contributed by Thr26. Residues 60–64 form a G2 region; the sequence is GITIN. Residues 81-84 form a G3 region; the sequence is DCPG. Residues 81-85 and 136-139 each bind GTP; these read DCPGH and NKTD. Residues 136-139 form a G4 region; that stretch reads NKTD. The tract at residues 174–176 is G5; it reads SAL.

The protein belongs to the TRAFAC class translation factor GTPase superfamily. Classic translation factor GTPase family. EF-Tu/EF-1A subfamily. As to quaternary structure, monomer.

The protein resides in the cytoplasm. It catalyses the reaction GTP + H2O = GDP + phosphate + H(+). Functionally, GTP hydrolase that promotes the GTP-dependent binding of aminoacyl-tRNA to the A-site of ribosomes during protein biosynthesis. The sequence is that of Elongation factor Tu 1 from Syntrophomonas wolfei subsp. wolfei (strain DSM 2245B / Goettingen).